A 732-amino-acid polypeptide reads, in one-letter code: DNA gyrase subunit B, mitochondrial (732 aa).

In terms of domain architecture, Toprim spans 513 to 620; that stretch reads SEIFIVEGDS…RYQRALFDAG (108 aa). Glu519, Asp593, and Asp595 together coordinate Mg(2+).

This sequence belongs to the type II topoisomerase GyrB family. As to quaternary structure, made up of two chains. The A chain is responsible for DNA breakage and rejoining; the B chain catalyzes ATP hydrolysis. The cofactor is Mg(2+). It depends on Mn(2+) as a cofactor. Ca(2+) serves as cofactor.

The protein resides in the mitochondrion. It carries out the reaction ATP-dependent breakage, passage and rejoining of double-stranded DNA.. In terms of biological role, a type II topoisomerase that negatively supercoils closed circular double-stranded DNA in an ATP-dependent manner. This Arabidopsis thaliana (Mouse-ear cress) protein is DNA gyrase subunit B, mitochondrial (GYRBM).